The primary structure comprises 217 residues: Probable GTP-binding protein EngB (217 aa).

One can recognise an EngB-type G domain in the interval 27–201 (GGVEIAFAGR…AQTLSGWYLA (175 aa)). Residues 35–42 (GRSNAGKS), 62–66 (GRTQL), 80–83 (DLPG), 147–150 (TKAD), and 180–182 (FSS) contribute to the GTP site. Residues S42 and T64 each coordinate Mg(2+).

The protein belongs to the TRAFAC class TrmE-Era-EngA-EngB-Septin-like GTPase superfamily. EngB GTPase family. Requires Mg(2+) as cofactor.

Necessary for normal cell division and for the maintenance of normal septation. The polypeptide is Probable GTP-binding protein EngB (Aeromonas salmonicida (strain A449)).